The primary structure comprises 334 residues: Glycerol-3-phosphate dehydrogenase [NAD(P)+] (334 aa).

Positions 13, 33, and 106 each coordinate NADPH. Sn-glycerol 3-phosphate-binding residues include K106, G137, and S139. A141 lines the NADPH pocket. K192, D245, S255, R256, and N257 together coordinate sn-glycerol 3-phosphate. K192 (proton acceptor) is an active-site residue. NADPH is bound at residue R256. NADPH contacts are provided by V280 and E282.

It belongs to the NAD-dependent glycerol-3-phosphate dehydrogenase family.

The protein resides in the cytoplasm. The catalysed reaction is sn-glycerol 3-phosphate + NAD(+) = dihydroxyacetone phosphate + NADH + H(+). The enzyme catalyses sn-glycerol 3-phosphate + NADP(+) = dihydroxyacetone phosphate + NADPH + H(+). It participates in membrane lipid metabolism; glycerophospholipid metabolism. In terms of biological role, catalyzes the reduction of the glycolytic intermediate dihydroxyacetone phosphate (DHAP) to sn-glycerol 3-phosphate (G3P), the key precursor for phospholipid synthesis. This is Glycerol-3-phosphate dehydrogenase [NAD(P)+] from Chlamydia abortus (strain DSM 27085 / S26/3) (Chlamydophila abortus).